Reading from the N-terminus, the 445-residue chain is ATP synthase subunit b-delta (445 aa).

An ATP synthase subunit b region spans residues 1–168 (MSIFIGQLIG…PSSVVIDTAA (168 aa)). A helical membrane pass occupies residues 3 to 23 (IFIGQLIGFAVIAFIIVKWVV). Residues 169 to 445 (TSRLRAASRQ…LAAAQTGLPD (277 aa)) are ATP synthase subunit delta.

The protein in the N-terminal section; belongs to the ATPase B chain family. This sequence in the C-terminal section; belongs to the ATPase delta chain family. As to quaternary structure, F-type ATPases have 2 components, F(1) - the catalytic core - and F(0) - the membrane proton channel. F(1) has five subunits: alpha(3), beta(3), gamma(1), delta(1), epsilon(1). F(0) has three main subunits: a(1), b(2) and c(10-14). The alpha and beta chains form an alternating ring which encloses part of the gamma chain. F(1) is attached to F(0) by a central stalk formed by the gamma and epsilon chains, while a peripheral stalk is formed by the delta and b chains.

Its subcellular location is the cell membrane. Its function is as follows. F(1)F(0) ATP synthase produces ATP from ADP in the presence of a proton or sodium gradient. F-type ATPases consist of two structural domains, F(1) containing the extramembraneous catalytic core and F(0) containing the membrane proton channel, linked together by a central stalk and a peripheral stalk. During catalysis, ATP synthesis in the catalytic domain of F(1) is coupled via a rotary mechanism of the central stalk subunits to proton translocation. This fusion protein includes a component of the F(0) channel (subunit b) and of the F(1) subunit (subunit delta). Two copies of subunit b and one of delta together form the peripheral 'stator' stalk which links F(1) to F(0). The polypeptide is ATP synthase subunit b-delta (atpFH) (Mycolicibacterium smegmatis (strain ATCC 700084 / mc(2)155) (Mycobacterium smegmatis)).